The chain runs to 218 residues: Glutathione S-transferase Mu 1 (218 aa).

Residues 2–88 enclose the GST N-terminal domain; it reads PMTLGYWDVR…YLARKHGLCG (87 aa). Glutathione-binding positions include 7–8, 46–50, 59–60, and 72–73; these read YW, WLSEK, NL, and QS. In terms of domain architecture, GST C-terminal spans 90–208; the sequence is TEEERIRVDI…KSSRFIRVPV (119 aa). Residue Tyr116 coordinates substrate.

The protein belongs to the GST superfamily. Mu family. Homodimer. Well expressed in rabbit liver, brain and kidney.

It localises to the cytoplasm. The catalysed reaction is RX + glutathione = an S-substituted glutathione + a halide anion + H(+). Conjugation of reduced glutathione to a wide number of exogenous and endogenous hydrophobic electrophiles. The sequence is that of Glutathione S-transferase Mu 1 from Oryctolagus cuniculus (Rabbit).